Here is a 147-residue protein sequence, read N- to C-terminus: Lysozyme C (147 aa).

A signal peptide spans 1–17 (MRSLLILVLCFLPLAAP). The C-type lysozyme domain maps to 19–147 (KVYGRCELAA…VNVWIRGCRL (129 aa)). Cystine bridges form between Cys-24–Cys-145, Cys-48–Cys-133, Cys-82–Cys-98, and Cys-94–Cys-112. Catalysis depends on residues Glu-53 and Asp-70.

The protein belongs to the glycosyl hydrolase 22 family. Monomer. Post-translationally, by an evolutionary shift in the site of proteolytic cleavage of prelysozyme, Gly-18 became the N-terminal residue of the mature protein instead of being the C-terminal residue of the signal sequence as in other birds.

It is found in the secreted. The catalysed reaction is Hydrolysis of (1-&gt;4)-beta-linkages between N-acetylmuramic acid and N-acetyl-D-glucosamine residues in a peptidoglycan and between N-acetyl-D-glucosamine residues in chitodextrins.. Its function is as follows. Lysozymes have primarily a bacteriolytic function; those in tissues and body fluids are associated with the monocyte-macrophage system and enhance the activity of immunoagents. The polypeptide is Lysozyme C (LYZ) (Phasianus colchicus colchicus (Black-necked pheasant)).